The following is a 213-amino-acid chain: Protein FAM156A/FAM156B (213 aa).

Position 1 is an N-acetylmethionine (M1). Positions 1–62 (MDPLQKRNPA…SQAVPLPEGL (62 aa)) are disordered. Residues 8–37 (NPASPSKSSPMTAAETSQEGPAPSQPSYSE) show a composition bias toward polar residues. Residue S114 is modified to Phosphoserine. A helical transmembrane segment spans residues 154–170 (WETLVQGLSGLTLSLGT). Positions 165 to 198 (TLSLGTNQPGPLPEAALQPQETEEKRQRERQQES) are disordered. Positions 186–197 (TEEKRQRERQQE) are enriched in basic and acidic residues.

The protein resides in the membrane. The polypeptide is Protein FAM156A/FAM156B (FAM156A) (Homo sapiens (Human)).